The sequence spans 132 residues: Small ribosomal subunit protein uS11 (132 aa).

The tract at residues 108–132 is disordered; sequence GRIEDVTPVPHDSCRPKGGRRGRRV.

It belongs to the universal ribosomal protein uS11 family. In terms of assembly, part of the 30S ribosomal subunit.

Located on the platform of the 30S subunit. The polypeptide is Small ribosomal subunit protein uS11 (Methanoregula boonei (strain DSM 21154 / JCM 14090 / 6A8)).